A 143-amino-acid chain; its full sequence is UPF0225 protein Reut_A0143 (143 aa).

This sequence belongs to the UPF0225 family.

The protein is UPF0225 protein Reut_A0143 of Cupriavidus pinatubonensis (strain JMP 134 / LMG 1197) (Cupriavidus necator (strain JMP 134)).